A 425-amino-acid polypeptide reads, in one-letter code: Alpha-(1,3)-fucosyltransferase C (425 aa).

Topologically, residues 1–37 are cytoplasmic; it reads MYLGRVHCSFEVPGLLSGRVGHMSMAVRSVRLACGPR. The helical; Signal-anchor for type II membrane protein transmembrane segment at 38-58 threads the bilayer; the sequence is GALLLLLLVLLGVLVVLHKVT. At 59–425 the chain is on the lumenal side; the sequence is QSPLLNQNKI…SCRLQSRIRL (367 aa). 2 N-linked (GlcNAc...) asparagine glycosylation sites follow: Asn187 and Asn230.

This sequence belongs to the glycosyltransferase 10 family.

The protein resides in the golgi apparatus. Its subcellular location is the golgi stack membrane. It functions in the pathway protein modification; protein glycosylation. The protein is Alpha-(1,3)-fucosyltransferase C (FucTC) of Drosophila melanogaster (Fruit fly).